Consider the following 365-residue polypeptide: Ribosomal RNA large subunit methyltransferase M (365 aa).

S-adenosyl-L-methionine contacts are provided by residues S193, C226 to G229, D245, D265, and D282. K311 serves as the catalytic Proton acceptor.

The protein belongs to the class I-like SAM-binding methyltransferase superfamily. RNA methyltransferase RlmE family. RlmM subfamily. In terms of assembly, monomer.

The protein resides in the cytoplasm. It catalyses the reaction cytidine(2498) in 23S rRNA + S-adenosyl-L-methionine = 2'-O-methylcytidine(2498) in 23S rRNA + S-adenosyl-L-homocysteine + H(+). Functionally, catalyzes the 2'-O-methylation at nucleotide C2498 in 23S rRNA. The protein is Ribosomal RNA large subunit methyltransferase M of Alteromonas mediterranea (strain DSM 17117 / CIP 110805 / LMG 28347 / Deep ecotype).